The chain runs to 1480 residues: DNA polymerase zeta catalytic subunit (1480 aa).

Positions 403–488 (DRSKFPKSPL…GDTRKAGKRL (86 aa)) are disordered. Polar residues predominate over residues 411–427 (PLNSSQEVTIHSSQDRQ). Positions 457-468 (TKREIEFCRDLP) are enriched in basic and acidic residues. The segment covering 470–479 (RPTSSEPNQG) has biased composition (polar residues). The Zn(2+) site is built by cysteine 1381, cysteine 1384, cysteine 1400, and cysteine 1403. The CysA-type zinc finger occupies 1381–1403 (CSSCLKNNIEIIPDKINSLCSDC). Residues cysteine 1432, cysteine 1435, cysteine 1446, and cysteine 1451 each contribute to the [4Fe-4S] cluster site. The short motif at 1432-1451 (CRGCSKLSSSDPVLCKSNSC) is the CysB motif element.

This sequence belongs to the DNA polymerase type-B family. As to quaternary structure, forms DNA polymerase zeta with rev7. [4Fe-4S] cluster is required as a cofactor.

The protein resides in the mitochondrion. Its subcellular location is the nucleus. The catalysed reaction is DNA(n) + a 2'-deoxyribonucleoside 5'-triphosphate = DNA(n+1) + diphosphate. In terms of biological role, nonessential DNA polymerase. Required for DNA damage induced mutagenesis. Involved in DNA repair, mitochondrial DNA repair and translesion synthesis. Has a role in the bypass of abasic (AP) sites. The protein is DNA polymerase zeta catalytic subunit (rev3) of Schizosaccharomyces pombe (strain 972 / ATCC 24843) (Fission yeast).